We begin with the raw amino-acid sequence, 272 residues long: Putative hydro-lyase BBta_2883 (272 aa).

The protein belongs to the D-glutamate cyclase family.

The polypeptide is Putative hydro-lyase BBta_2883 (Bradyrhizobium sp. (strain BTAi1 / ATCC BAA-1182)).